The chain runs to 444 residues: Glutamyl-tRNA reductase (444 aa).

Substrate contacts are provided by residues 49-52 (TCNR), serine 109, 114-116 (ETQ), and glutamine 120. The active-site Nucleophile is cysteine 50. 189-194 (GAGKMG) lines the NADP(+) pocket.

The protein belongs to the glutamyl-tRNA reductase family. In terms of assembly, homodimer.

It catalyses the reaction (S)-4-amino-5-oxopentanoate + tRNA(Glu) + NADP(+) = L-glutamyl-tRNA(Glu) + NADPH + H(+). The protein operates within porphyrin-containing compound metabolism; protoporphyrin-IX biosynthesis; 5-aminolevulinate from L-glutamyl-tRNA(Glu): step 1/2. In terms of biological role, catalyzes the NADPH-dependent reduction of glutamyl-tRNA(Glu) to glutamate 1-semialdehyde (GSA). The protein is Glutamyl-tRNA reductase of Bacillus cereus (strain ATCC 14579 / DSM 31 / CCUG 7414 / JCM 2152 / NBRC 15305 / NCIMB 9373 / NCTC 2599 / NRRL B-3711).